A 178-amino-acid polypeptide reads, in one-letter code: uncharacterized protein (178 aa).

The first 23 residues, 1 to 23 (MNYSVIWAITILILGLVLTLAWA), serve as a signal peptide directing secretion.

This is an uncharacterized protein from Invertebrate iridescent virus 3 (IIV-3).